The sequence spans 179 residues: Large ribosomal subunit protein uL5 (179 aa).

This sequence belongs to the universal ribosomal protein uL5 family. Part of the 50S ribosomal subunit; part of the 5S rRNA/L5/L18/L25 subcomplex. Contacts the 5S rRNA and the P site tRNA. Forms a bridge to the 30S subunit in the 70S ribosome.

Its function is as follows. This is one of the proteins that bind and probably mediate the attachment of the 5S RNA into the large ribosomal subunit, where it forms part of the central protuberance. In the 70S ribosome it contacts protein S13 of the 30S subunit (bridge B1b), connecting the 2 subunits; this bridge is implicated in subunit movement. Contacts the P site tRNA; the 5S rRNA and some of its associated proteins might help stabilize positioning of ribosome-bound tRNAs. The sequence is that of Large ribosomal subunit protein uL5 from Saccharophagus degradans (strain 2-40 / ATCC 43961 / DSM 17024).